The primary structure comprises 113 residues: MMKKSILAFLLLTSSAAALAAPQVITVSRFEVGKDKWAFNREEVMLTCRPGNALYVINPSTLVQYPLNDIAQKEVASGKTNAQPISVIQIDDPNNPGEKMSLAPFIERAEKLC.

The N-terminal stretch at 1–20 (MMKKSILAFLLLTSSAAALA) is a signal peptide.

This is an uncharacterized protein from Escherichia coli (strain K12).